We begin with the raw amino-acid sequence, 491 residues long: Carbohydrate ABC transporter substrate-binding protein (491 aa).

Aspartate 212, histidine 247, histidine 252, and glutamate 256 together coordinate Zn(2+).

It belongs to the bacterial solute-binding protein 1 family. In terms of assembly, exists as a monomer, homodimer, homotrimer and homotetramer; oligomerization increases with higher protein concentration.

The protein resides in the cell surface. In terms of biological role, probably part of an ABC transporter complex involved in carbohydrate transport. The chain is Carbohydrate ABC transporter substrate-binding protein from Streptococcus pneumoniae serotype 4 (strain ATCC BAA-334 / TIGR4).